Reading from the N-terminus, the 281-residue chain is Probable endonuclease 4 (281 aa).

The Zn(2+) site is built by His69, His109, Glu145, Asp179, His182, His216, Asp229, His231, and Glu261.

Belongs to the AP endonuclease 2 family. Zn(2+) is required as a cofactor.

The catalysed reaction is Endonucleolytic cleavage to 5'-phosphooligonucleotide end-products.. Functionally, endonuclease IV plays a role in DNA repair. It cleaves phosphodiester bonds at apurinic or apyrimidinic (AP) sites, generating a 3'-hydroxyl group and a 5'-terminal sugar phosphate. The protein is Probable endonuclease 4 of Aeromonas hydrophila subsp. hydrophila (strain ATCC 7966 / DSM 30187 / BCRC 13018 / CCUG 14551 / JCM 1027 / KCTC 2358 / NCIMB 9240 / NCTC 8049).